Reading from the N-terminus, the 221-residue chain is Phosphoribosylformylglycinamidine synthase subunit PurQ (221 aa).

The Glutamine amidotransferase type-1 domain maps to 3-221 (AAVLVFPGSN…MFASLMQVMA (219 aa)). Cys-87 serves as the catalytic Nucleophile. Active-site residues include His-195 and Glu-197.

Part of the FGAM synthase complex composed of 1 PurL, 1 PurQ and 2 PurS subunits.

The protein localises to the cytoplasm. The catalysed reaction is N(2)-formyl-N(1)-(5-phospho-beta-D-ribosyl)glycinamide + L-glutamine + ATP + H2O = 2-formamido-N(1)-(5-O-phospho-beta-D-ribosyl)acetamidine + L-glutamate + ADP + phosphate + H(+). The enzyme catalyses L-glutamine + H2O = L-glutamate + NH4(+). It participates in purine metabolism; IMP biosynthesis via de novo pathway; 5-amino-1-(5-phospho-D-ribosyl)imidazole from N(2)-formyl-N(1)-(5-phospho-D-ribosyl)glycinamide: step 1/2. Its function is as follows. Part of the phosphoribosylformylglycinamidine synthase complex involved in the purines biosynthetic pathway. Catalyzes the ATP-dependent conversion of formylglycinamide ribonucleotide (FGAR) and glutamine to yield formylglycinamidine ribonucleotide (FGAM) and glutamate. The FGAM synthase complex is composed of three subunits. PurQ produces an ammonia molecule by converting glutamine to glutamate. PurL transfers the ammonia molecule to FGAR to form FGAM in an ATP-dependent manner. PurS interacts with PurQ and PurL and is thought to assist in the transfer of the ammonia molecule from PurQ to PurL. In Zymomonas mobilis subsp. mobilis (strain ATCC 31821 / ZM4 / CP4), this protein is Phosphoribosylformylglycinamidine synthase subunit PurQ.